The chain runs to 189 residues: ATP-dependent protease subunit HslV (189 aa).

The active site involves Thr12. Residues Ser172, Cys175, and Thr178 each coordinate Na(+).

The protein belongs to the peptidase T1B family. HslV subfamily. A double ring-shaped homohexamer of HslV is capped on each side by a ring-shaped HslU homohexamer. The assembly of the HslU/HslV complex is dependent on binding of ATP.

It is found in the cytoplasm. The catalysed reaction is ATP-dependent cleavage of peptide bonds with broad specificity.. Its activity is regulated as follows. Allosterically activated by HslU binding. In terms of biological role, protease subunit of a proteasome-like degradation complex believed to be a general protein degrading machinery. This is ATP-dependent protease subunit HslV from Ehrlichia canis (strain Jake).